We begin with the raw amino-acid sequence, 67 residues long: Large ribosomal subunit protein bL35 (67 aa).

The protein belongs to the bacterial ribosomal protein bL35 family.

The protein is Large ribosomal subunit protein bL35 of Brachyspira hyodysenteriae (strain ATCC 49526 / WA1).